The chain runs to 136 residues: Ribonuclease VapC1 (136 aa).

Residues 18–129 (ILVDTSVLID…KKHFERLKEF (112 aa)) form the PINc domain. Residues aspartate 21 and aspartate 101 each contribute to the Mg(2+) site.

It belongs to the PINc/VapC protein family. It depends on Mg(2+) as a cofactor.

In terms of biological role, toxic component of a type II toxin-antitoxin (TA) system. An RNase. Its cognate antitoxin is VapB1. This Methanocaldococcus jannaschii (strain ATCC 43067 / DSM 2661 / JAL-1 / JCM 10045 / NBRC 100440) (Methanococcus jannaschii) protein is Ribonuclease VapC1.